We begin with the raw amino-acid sequence, 723 residues long: Homeobox protein vnd (723 aa).

Disordered regions lie at residues M1–P115, A224–P307, G465–R549, and H703–P723. The span at T10 to N22 shows a compositional bias: basic and acidic residues. Low complexity predominate over residues S23 to P36. Residues Q37 to A48 are compositionally biased toward polar residues. Positions L61–F92 are enriched in basic and acidic residues. The segment covering S97–S111 has biased composition (low complexity). Over residues H226–A235 the composition is skewed to basic and acidic residues. Residues E237–S255 show a composition bias toward polar residues. Residues E278 to A289 show a composition bias toward basic and acidic residues. Over residues H298–P307 the composition is skewed to basic residues. The span at N483–N493 shows a compositional bias: low complexity. A compositionally biased stretch (acidic residues) spans L512–D528. Positions K545–Q604 form a DNA-binding region, homeobox. A compositionally biased stretch (basic residues) spans H703–A716.

This sequence belongs to the NK-2 homeobox family. In terms of tissue distribution, expressed in the CNS and midgut.

The protein resides in the nucleus. Functionally, probable transcriptional regulator involved in the regulation of the proneural AS-C genes and the neurogenic genes of the enhancer of split complex. Could specifically activate proneural genes in the ventral-most neuroectoderm. This Drosophila melanogaster (Fruit fly) protein is Homeobox protein vnd (vnd).